Consider the following 79-residue polypeptide: Large ribosomal subunit protein bL31c (79 aa).

It belongs to the bacterial ribosomal protein bL31 family. Type A subfamily. In terms of assembly, part of the 50S ribosomal subunit.

It localises to the plastid. The protein resides in the chloroplast. Its function is as follows. Binds the 23S rRNA. The sequence is that of Large ribosomal subunit protein bL31c from Gracilaria tenuistipitata var. liui (Red alga).